We begin with the raw amino-acid sequence, 206 residues long: Large ribosomal subunit protein uL22m (206 aa).

Residues 1–40 (MAAAVLGQLGALWIHNLRSRGKLALGVLPQSYIHTSASLD) constitute a mitochondrion transit peptide.

It belongs to the universal ribosomal protein uL22 family. In terms of assembly, component of the mitochondrial large ribosomal subunit (mt-LSU). Mature mammalian 55S mitochondrial ribosomes consist of a small (28S) and a large (39S) subunit. The 28S small subunit contains a 12S ribosomal RNA (12S mt-rRNA) and 30 different proteins. The 39S large subunit contains a 16S rRNA (16S mt-rRNA), a copy of mitochondrial valine transfer RNA (mt-tRNA(Val)), which plays an integral structural role, and 52 different proteins.

The protein localises to the mitochondrion. This is Large ribosomal subunit protein uL22m (MRPL22) from Homo sapiens (Human).